A 218-amino-acid polypeptide reads, in one-letter code: Glutathione S-transferase Mu 1 (218 aa).

The GST N-terminal domain maps to 2-88 (PMILGYWNVR…YLARKHHLDG (87 aa)). Residue 7 to 8 (YW) coordinates glutathione. The residue at position 34 (Thr-34) is a Phosphothreonine. Glutathione-binding positions include 43-46 (RSQW), Lys-50, and 59-60 (NL). Ser-67 bears the Phosphoserine mark. 72 to 73 (QS) is a binding site for glutathione. Residues 90–208 (TEEERIRADI…KSSRYIATPI (119 aa)) form the GST C-terminal domain. Residue Tyr-116 coordinates substrate. Ser-210 bears the Phosphoserine mark.

Homodimer.

It localises to the cytoplasm. It catalyses the reaction RX + glutathione = an S-substituted glutathione + a halide anion + H(+). The catalysed reaction is prostaglandin A2 + glutathione = prostaglandin A2-S-(R)-glutathione. It carries out the reaction prostaglandin J2 + glutathione = prostaglandin J2-S-(R)-glutathione. The enzyme catalyses prostaglandin J2 + glutathione = prostaglandin J2-S-(S)-glutathione. It catalyses the reaction prostaglandin A2 + glutathione = prostaglandin A2-S-(S)-glutathione. The catalysed reaction is 11(S)-hydroxy-14(S),15(S)-epoxy-(5Z,8Z,12E)-eicosatrienoate + glutathione = (11S,15S)-dihydroxy-14(R)-S-glutathionyl-(5Z,8Z,12E)-eicosatrienoate. Functionally, conjugation of reduced glutathione to a wide number of exogenous and endogenous hydrophobic electrophiles. Involved in the formation of glutathione conjugates of both prostaglandin A2 (PGA2) and prostaglandin J2 (PGJ2). Participates in the formation of novel hepoxilin regioisomers. This is Glutathione S-transferase Mu 1 from Mus musculus (Mouse).